Here is a 632-residue protein sequence, read N- to C-terminus: 1-deoxy-D-xylulose-5-phosphate synthase (632 aa).

Thiamine diphosphate is bound by residues His-79 and 120 to 122 (GHA). Position 152 (Asp-152) interacts with Mg(2+). Residues 153–154 (GA), Asn-181, Phe-293, and Glu-377 contribute to the thiamine diphosphate site. Residue Asn-181 coordinates Mg(2+).

This sequence belongs to the transketolase family. DXPS subfamily. As to quaternary structure, homodimer. Requires Mg(2+) as cofactor. Thiamine diphosphate serves as cofactor.

The enzyme catalyses D-glyceraldehyde 3-phosphate + pyruvate + H(+) = 1-deoxy-D-xylulose 5-phosphate + CO2. It participates in metabolic intermediate biosynthesis; 1-deoxy-D-xylulose 5-phosphate biosynthesis; 1-deoxy-D-xylulose 5-phosphate from D-glyceraldehyde 3-phosphate and pyruvate: step 1/1. Functionally, catalyzes the acyloin condensation reaction between C atoms 2 and 3 of pyruvate and glyceraldehyde 3-phosphate to yield 1-deoxy-D-xylulose-5-phosphate (DXP). The sequence is that of 1-deoxy-D-xylulose-5-phosphate synthase from Parabacteroides distasonis (strain ATCC 8503 / DSM 20701 / CIP 104284 / JCM 5825 / NCTC 11152).